Consider the following 216-residue polypeptide: Guanylate kinase (216 aa).

The 179-residue stretch at 11–189 (GVLIVISGPS…AVKKIEAILL (179 aa)) folds into the Guanylate kinase-like domain. Residue 18–25 (GPSGAGKG) coordinates ATP.

Belongs to the guanylate kinase family.

The protein resides in the cytoplasm. It catalyses the reaction GMP + ATP = GDP + ADP. In terms of biological role, essential for recycling GMP and indirectly, cGMP. The polypeptide is Guanylate kinase (Clostridium perfringens (strain ATCC 13124 / DSM 756 / JCM 1290 / NCIMB 6125 / NCTC 8237 / Type A)).